The sequence spans 115 residues: Hydrogenase maturation factor HypA (115 aa).

His2 lines the Ni(2+) pocket. The Zn(2+) site is built by Cys73, Cys76, Cys89, and Cys92.

Belongs to the HypA/HybF family.

Involved in the maturation of [NiFe] hydrogenases. Required for nickel insertion into the metal center of the hydrogenase. This is Hydrogenase maturation factor HypA from Shewanella halifaxensis (strain HAW-EB4).